An 83-amino-acid chain; its full sequence is RNA-binding protein Hfq (83 aa).

The Sm domain maps to 10-69 (DPFLNALRREHVPVSIYLVNGIKLQGQIESFDQYVVLLRNTVTQMVYKHAISTIVPGRAV).

This sequence belongs to the Hfq family. In terms of assembly, homohexamer.

Its function is as follows. RNA chaperone that binds small regulatory RNA (sRNAs) and mRNAs to facilitate mRNA translational regulation in response to envelope stress, environmental stress and changes in metabolite concentrations. Also binds with high specificity to tRNAs. The polypeptide is RNA-binding protein Hfq (Paracidovorax citrulli (strain AAC00-1) (Acidovorax citrulli)).